The chain runs to 419 residues: Putative BTB/POZ domain-containing protein L85 (419 aa).

A BTB domain is found at 16 to 89 (TDLTIVLKDD…FYDKTSTNSE (74 aa)). The disordered stretch occupies residues 250–290 (SSSNDSDEDASETESEHNSETESEHNSETESEHNSETESKH). The span at 263 to 290 (ESEHNSETESEHNSETESEHNSETESKH) shows a compositional bias: basic and acidic residues.

It belongs to the mimivirus BTB/WD family.

This is Putative BTB/POZ domain-containing protein L85 from Acanthamoeba polyphaga (Amoeba).